A 374-amino-acid chain; its full sequence is Translocating chain-associated membrane protein 1 (374 aa).

Over 1-29 the chain is Cytoplasmic; sequence MAIRKKSTKSPPVLSHEFVLQNHADIVSC. A helical membrane pass occupies residues 30 to 50; it reads VAMVFLLGLMFEITAKASIIF. Residues 51–76 are Lumenal-facing; that stretch reads VTLQYNVTLPATEEQATESASLYYYG. Asn-56 carries N-linked (GlcNAc...) asparagine glycosylation. Residues 77-97 traverse the membrane as a helical segment; that stretch reads IKDLATVFFYMLVAIIIHAVI. Residues 98–121 lie on the Cytoplasmic side of the membrane; the sequence is QEYMLDKINRRMHFSKTKHSKFNE. The TLC domain occupies 117–326; sequence SKFNESGQLS…NFQLRRWREH (210 aa). The helical transmembrane segment at 122–142 threads the bilayer; the sequence is SGQLSAFYLFACVWGTFILIS. Residues 143–159 lie on the Lumenal side of the membrane; the sequence is ENYISDPTILWRAYPHN. A helical transmembrane segment spans residues 160-180; it reads LMTFQMKFFYISQLAYWLHAF. At 181 to 192 the chain is on the cytoplasmic side; sequence PELYFQKTKRED. The chain crosses the membrane as a helical span at residues 193–213; sequence IPRQLVYIGLYLFHIAGAYLL. Residue Asn-214 is a topological domain, lumenal. Residues 215 to 235 form a helical membrane-spanning segment; it reads LNHLGLVLLVLHYFVEFLFHI. The Cytoplasmic portion of the chain corresponds to 236–251; that stretch reads SRLFYFSNEKYQKGFS. Residues 252 to 272 form a helical membrane-spanning segment; sequence LWAVLFVLGRLLTLILSVLTV. Residues 273–297 lie on the Lumenal side of the membrane; sequence GFGLARAENQKLDFSTGNFNVLAVR. The chain crosses the membrane as a helical span at residues 298-318; it reads IAVLASICITQAFMVWKFINF. At 319–374 the chain is on the cytoplasmic side; the sequence is QLRRWREHSAFQAPAVKKKPTVTKGRSSKKGTENGVNGTLTSNVADSPRNKKEKSS. The segment covering 334 to 347 has biased composition (basic residues); that stretch reads VKKKPTVTKGRSSK. The interval 334–374 is disordered; that stretch reads VKKKPTVTKGRSSKKGTENGVNGTLTSNVADSPRNKKEKSS. A compositionally biased stretch (polar residues) spans 352-363; sequence NGVNGTLTSNVA. Residue Ser-365 is modified to Phosphoserine.

Belongs to the TRAM family. As to quaternary structure, interacts with SEC61B. May interact with Derlin-1/DERL1. N-glycosylated.

It is found in the endoplasmic reticulum membrane. Functionally, involved in the translocation of nascent protein chains into or through the endoplasmic reticulum (ER) membrane by facilitating the proper chain positioning at the SEC61 channel. Regulates the exposure of nascent secretory protein chain to the cytosol during translocation into the ER. May affect the phospholipid bilayer in the vicinity of the lateral gate of the SEC61 channel, thereby facilitating ER protein transport. Intimately associates with transmembrane (TM) domain of nascent membrane proteins during the entire integration process into the ER membrane. Associates with the second TM domain of G-protein-coupled receptor opsin/OPSD nascent chain in the ER membrane, which may facilitate its integration into the membrane. Under conditions of ER stress, participates in the disposal of misfolded ER membrane proteins during the unfolded protein response (UPR), an integrated stress response (ISR) pathway, by selectively retrotranslocating misfolded ER-membrane proteins from the ER into the cytosol where they are ubiquitinated and degraded by the proteasome. The protein is Translocating chain-associated membrane protein 1 (TRAM1) of Pongo abelii (Sumatran orangutan).